The sequence spans 1278 residues: Sterol regulatory element-binding protein cleavage-activating protein (1278 aa).

The Cytoplasmic portion of the chain corresponds to 1 to 18 (MTLTERLREKISQAFYNH). Residues 19–39 (GLFCASYPIPIILFTGLCILA) traverse the membrane as a helical segment. Topologically, residues 40-279 (CCYPLLKLPL…SLVHVHFKEE (240 aa)) are lumenal. The segment at 46-284 (KLPLPGTGPV…HFKEEIGIAE (239 aa)) is loop-1. A disordered region spans residues 60 to 80 (PVKDYSPPPLTSDHKPGEPNE). N-linked (GlcNAc...) asparagine glycosylation is present at N263. The chain crosses the membrane as a helical span at residues 280–300 (IGIAELIPLVTTYIILFAYIY). Positions 284–442 (ELIPLVTTYI…MLFFTTVLSI (159 aa)) constitute an SSD domain. Topologically, residues 301-312 (FSTRKIDMVKSK) are cytoplasmic. The helical transmembrane segment at 313 to 333 (WGLALAAVVTVLSSLLMSVGL) threads the bilayer. The Lumenal segment spans residues 334 to 344 (CTLFGLTPTLN). Residues 345 to 365 (GGEIFPYLVVVIGLENVLVLT) traverse the membrane as a helical segment. Residues 366–401 (KSVVSTPVDLEVKLRIAQGLSSESWSIMKNMATELG) lie on the Cytoplasmic side of the membrane. A helical membrane pass occupies residues 402-422 (IVLIGYFTLVPAIQEFCLFAV). Position 423 (V423) is a topological domain, lumenal. Residues 424 to 444 (GLVSDFFLQMLFFTTVLSIDI) traverse the membrane as a helical segment. Over 445–518 (RRMELADLNK…FLARTRLAQR (74 aa)) the chain is Cytoplasmic. Positions 447-452 (MELADL) match the ER export signal motif. Residues K454 and K466 each participate in a glycyl lysine isopeptide (Lys-Gly) (interchain with G-Cter in ubiquitin) cross-link. The helical transmembrane segment at 519-539 (LIMAGTVVWIGILVYTDPAGL) threads the bilayer. The interval 535-710 (DPAGLRTYLA…QAQRDLTLYK (176 aa)) is loop-7. Topologically, residues 540–707 (RTYLAAQVTE…GTAQAQRDLT (168 aa)) are lumenal. The interval 581–618 (PPDASKLPENQTLPGEPPEPGGLAEGVHDSPAPEVTWG) is disordered. N-linked (GlcNAc...) asparagine glycans are attached at residues N590 and N641. A disordered region spans residues 668–696 (EGRHPQDGRSAWPPPRPGQGGLWEAGPKG). The helical transmembrane segment at 708–728 (LYKVAALGLASGIVLVLLLLC) threads the bilayer. The Cytoplasmic portion of the chain corresponds to 729 to 1278 (LYRVLCPRNY…YVPSVLEKLD (550 aa)). The segment at 731–1278 (RVLCPRNYGQ…YVPSVLEKLD (548 aa)) is interaction with SREBF2. One copy of the WD 1 repeat lies at 771–811 (VLRGHLMDIECLASDGMLLVSCCLAGHVCVWDAQTGDCLTR). Phosphoserine is present on residues S821, S837, S850, S905, and S935. Positions 834–904 (ERLSDGGKGG…RYRAGRRAQD (71 aa)) are disordered. WD repeat units lie at residues 951-1001 (PPEK…LRCS) and 1004-1041 (EVSS…ALSP). Position 1050 is an omega-N-methylarginine (R1050). 4 WD repeats span residues 1076-1113 (AHQK…CLFT), 1116-1154 (GHSG…RVSH), 1157-1194 (AHRG…KLYS), and 1196-1234 (QQDL…LLQT).

This sequence belongs to the WD repeat SCAP family. Membrane region forms a homotetramer. Component of the SCAP-SREBP complex (composed of SCAP and SREBF1/SREBP1 or SREBF2/SREBP2); interacts with SREBF1/SREBP1 or SREBF2/SREBP2 through its C-terminal cytoplasmic domain. Forms a ternary complex with INSIG1 or INSIG2 through its transmembrane domains at high sterol concentrations. Interacts with PAQR3; the interaction anchors the SCAP-SREBP complex to the Golgi apparatus in low cholesterol conditions. Interacts with the SEC23-SEC24 complex in a SAR1-GTP-dependent manner through an ER export signal in its third cytoplasmic loop. Interacts with RNF139; the interaction inhibits the interaction of SCAP with SEC24B and hampering the ER to Golgi transport of the SCAP-SREBP complex. Interacts with SPRING1. Ubiquitinated at Lys-454 and Lys-466. RNF145 triggers ubiquitination of SCAP, likely inhibiting SCAP-SREBP complex transport to the Golgi apparatus and the subsequent processing/maturation of SREBF2/SREBP2.

It localises to the endoplasmic reticulum membrane. The protein localises to the golgi apparatus membrane. Its subcellular location is the cytoplasmic vesicle. The protein resides in the COPII-coated vesicle membrane. Its function is as follows. Escort protein required for cholesterol as well as lipid homeostasis. Regulates export of the SCAP-SREBP complex from the endoplasmic reticulum to the Golgi upon low cholesterol, thereby regulating the processing of sterol regulatory element-binding proteins (SREBPs) SREBF1/SREBP1 and SREBF2/SREBP2. At high sterol concentrations, formation of a ternary complex with INSIG (INSIG1 or INSIG2) leads to mask the ER export signal in SCAP, promoting retention of the complex in the endoplasmic reticulum. Low sterol concentrations trigger release of INSIG, a conformational change in the SSD domain of SCAP, unmasking of the ER export signal, promoting recruitment into COPII-coated vesicles and transport of the SCAP-SREBP to the Golgi: in the Golgi, SREBPs are then processed, releasing the transcription factor fragment of SREBPs from the membrane, its import into the nucleus and up-regulation of LDLR, INSIG1 and the mevalonate pathway. Binds cholesterol via its SSD domain. The protein is Sterol regulatory element-binding protein cleavage-activating protein of Bos taurus (Bovine).